A 362-amino-acid chain; its full sequence is N-alpha-acetyltransferase 30 (362 aa).

Pro residues predominate over residues 1–20 (MAEVPPGPSSLLPPPAPPAP). 3 disordered regions span residues 1 to 26 (MAEV…VEPR), 38 to 88 (CSED…NGLI), and 113 to 182 (ATTA…EEDE). Residues Ser39 and Ser55 each carry the phosphoserine modification. Acidic residues predominate over residues 39–48 (SEDEEDDEEH). Thr117 carries the phosphothreonine modification. Low complexity predominate over residues 149-165 (AVPSPVEAAAASDPAAA). Ser152 carries the post-translational modification Phosphoserine. Residues 173-182 (TEQEEEEEDE) show a composition bias toward acidic residues. Ser190, Ser196, and Ser199 each carry phosphoserine. The N-acetyltransferase domain occupies 214–362 (RYVRYESELQ…DALRLKLWLR (149 aa)). Position 233 is an N6-acetyllysine (Lys233).

The protein belongs to the acetyltransferase family. MAK3 subfamily. Component of the N-terminal acetyltransferase C (NatC) complex, which is composed of NAA35, NAA38 and NAA30.

The protein localises to the cytoplasm. Its subcellular location is the nucleus. It catalyses the reaction N-terminal L-methionyl-L-leucyl-[protein] + acetyl-CoA = N-terminal N(alpha)-acetyl-L-methionyl-L-leucyl-[protein] + CoA + H(+). The enzyme catalyses N-terminal L-methionyl-L-isoleucyl-[protein] + acetyl-CoA = N-terminal N(alpha)-acetyl-L-methionyl-L-isoleucyl-[protein] + CoA + H(+). It carries out the reaction N-terminal L-methionyl-L-phenylalanyl-[protein] + acetyl-CoA = N-terminal N(alpha)-acetyl-L-methionyl-L-phenylalanyl-[protein] + CoA + H(+). The catalysed reaction is N-terminal L-methionyl-L-tryptophyl-[protein] + acetyl-CoA = N-terminal N(alpha)-acetyl-L-methionyl-L-tryptophyl-[protein] + CoA + H(+). It catalyses the reaction N-terminal L-methionyl-L-tyrosyl-[protein] + acetyl-CoA = N-terminal N(alpha)-acetyl-L-methionyl-L-tyrosyl-[protein] + CoA + H(+). In terms of biological role, catalytic subunit of the N-terminal acetyltransferase C (NatC) complex. Catalyzes acetylation of the N-terminal methionine residues of peptides beginning with Met-Leu-Ala and Met-Leu-Gly. N-terminal acetylation protects proteins from ubiquitination and degradation by the N-end rule pathway. Necessary for the lysosomal localization and function of ARL8B sugeesting that ARL8B is a NatC substrate. In Homo sapiens (Human), this protein is N-alpha-acetyltransferase 30 (NAA30).